A 407-amino-acid chain; its full sequence is Queuine tRNA-ribosyltransferase-like protein (407 aa).

It belongs to the queuine tRNA-ribosyltransferase family.

The polypeptide is Queuine tRNA-ribosyltransferase-like protein (Plasmodium falciparum (isolate 3D7)).